Here is a 469-residue protein sequence, read N- to C-terminus: 3-isopropylmalate dehydratase large subunit 2 (469 aa).

Residues cysteine 347, cysteine 408, and cysteine 411 each coordinate [4Fe-4S] cluster.

It belongs to the aconitase/IPM isomerase family. LeuC type 1 subfamily. Heterodimer of LeuC and LeuD. Requires [4Fe-4S] cluster as cofactor.

It catalyses the reaction (2R,3S)-3-isopropylmalate = (2S)-2-isopropylmalate. The protein operates within amino-acid biosynthesis; L-leucine biosynthesis; L-leucine from 3-methyl-2-oxobutanoate: step 2/4. Functionally, catalyzes the isomerization between 2-isopropylmalate and 3-isopropylmalate, via the formation of 2-isopropylmaleate. This chain is 3-isopropylmalate dehydratase large subunit 2, found in Mannheimia succiniciproducens (strain KCTC 0769BP / MBEL55E).